Consider the following 688-residue polypeptide: G protein-coupled receptor kinase 3 (688 aa).

The segment at 1–190 (MADLEAVLAD…ELNIHLSMND (190 aa)) is N-terminal. The 122-residue stretch at 54–175 (TFDKIFNQKI…MESDKFTRFC (122 aa)) folds into the RGS domain. The 263-residue stretch at 191-453 (FSVHRIIGRG…ARELKEHIFF (263 aa)) folds into the Protein kinase domain. Residues 197–205 (IGRGGFGEV) and Lys-220 contribute to the ATP site. Asp-317 acts as the Proton acceptor in catalysis. The AGC-kinase C-terminal domain maps to 454–521 (KGIDWQHVYL…VISERWQQEV (68 aa)). Positions 558–652 (DCIMHGYMLK…WLKELTCTFN (95 aa)) constitute a PH domain.

Belongs to the protein kinase superfamily. AGC Ser/Thr protein kinase family. GPRK subfamily. As to quaternary structure, interacts with GIT1. Post-translationally, ubiquitinated.

Its subcellular location is the postsynapse. It is found in the presynapse. It carries out the reaction [beta-adrenergic receptor] + ATP = [beta-adrenergic receptor]-phosphate + ADP + H(+). Specifically phosphorylates the agonist-occupied form of the beta-adrenergic and closely related receptors. This Mus musculus (Mouse) protein is G protein-coupled receptor kinase 3.